The sequence spans 135 residues: Ribonuclease P protein component (135 aa).

This sequence belongs to the RnpA family. As to quaternary structure, consists of a catalytic RNA component (M1 or rnpB) and a protein subunit.

The enzyme catalyses Endonucleolytic cleavage of RNA, removing 5'-extranucleotides from tRNA precursor.. RNaseP catalyzes the removal of the 5'-leader sequence from pre-tRNA to produce the mature 5'-terminus. It can also cleave other RNA substrates such as 4.5S RNA. The protein component plays an auxiliary but essential role in vivo by binding to the 5'-leader sequence and broadening the substrate specificity of the ribozyme. The chain is Ribonuclease P protein component from Pseudomonas aeruginosa (strain LESB58).